The following is a 116-amino-acid chain: uncharacterized protein (116 aa).

Positions 1-19 are cleaved as a signal peptide; sequence MRWDVIILYAISRPYATRR. A disordered region spans residues 18-50; the sequence is RRTGSHTHPRDSRYIAANQRRPPSACRVGPSPA.

This is an uncharacterized protein from Saccharomyces cerevisiae (strain ATCC 204508 / S288c) (Baker's yeast).